We begin with the raw amino-acid sequence, 172 residues long: Adenine phosphoribosyltransferase (172 aa).

This sequence belongs to the purine/pyrimidine phosphoribosyltransferase family. In terms of assembly, homodimer.

It localises to the cytoplasm. The enzyme catalyses AMP + diphosphate = 5-phospho-alpha-D-ribose 1-diphosphate + adenine. It participates in purine metabolism; AMP biosynthesis via salvage pathway; AMP from adenine: step 1/1. In terms of biological role, catalyzes a salvage reaction resulting in the formation of AMP, that is energically less costly than de novo synthesis. In Clostridium novyi (strain NT), this protein is Adenine phosphoribosyltransferase.